The following is a 757-amino-acid chain: Polyribonucleotide nucleotidyltransferase (757 aa).

Mg(2+) is bound by residues aspartate 488 and aspartate 494. Positions 555 to 614 constitute a KH domain; sequence PKLYTMKINAEKIRDVIGKGGAVIRALTEETGCQINIEEDGTITIAATDAAKADIAKRRI. Residues 624–692 enclose the S1 motif domain; that stretch reads GKIYEGPVTK…ERGRVKLSMK (69 aa). The segment at 693-757 is disordered; the sequence is VLAERPAPGS…ADTGSGQRVG (65 aa). The segment covering 720–736 has biased composition (basic and acidic residues); sequence ALAEREPRREMRDHGHP. A compositionally biased stretch (low complexity) spans 737 to 747; it reads PSEQQQQQSPP.

The protein belongs to the polyribonucleotide nucleotidyltransferase family. Mg(2+) is required as a cofactor.

The protein localises to the cytoplasm. The catalysed reaction is RNA(n+1) + phosphate = RNA(n) + a ribonucleoside 5'-diphosphate. Functionally, involved in mRNA degradation. Catalyzes the phosphorolysis of single-stranded polyribonucleotides processively in the 3'- to 5'-direction. This Verminephrobacter eiseniae (strain EF01-2) protein is Polyribonucleotide nucleotidyltransferase.